Here is a 308-residue protein sequence, read N- to C-terminus: MVTTLDNALLNDILQQVRPLIGQGKVADYIPALAEVPANKLGIAVCTLDGQIFQAGDADERFSIQSISKVLSLTLALSRYSEQDIWQRVGKEPSGQPFNSLVQLELEKGKPRNPFINLGALVVCDMLQSRLSAPKQRLLEVVRQLVKDDSISYDPRVARSEFEHSDRNAAIAYLMKSFGNFDNDVLTVLQTYFHYCAMRMSCVELARCFVYLANQGRSISGSESLITPMQARQINALMITSGMYDGAGEFAFRVGMPGKSGVGGGIIAIVPDEFCIAVWSPELDHAGNSLAGTAALERLAQQMGRSIF.

Serine 66, asparagine 117, glutamate 161, asparagine 168, tyrosine 192, tyrosine 244, and valine 262 together coordinate substrate.

The protein belongs to the glutaminase family. Homotetramer.

The catalysed reaction is L-glutamine + H2O = L-glutamate + NH4(+). This Yersinia pestis bv. Antiqua (strain Nepal516) protein is Glutaminase.